A 396-amino-acid chain; its full sequence is Phosphoglycerate kinase (396 aa).

Substrate contacts are provided by residues 21-23 (DFN), Arg-36, 59-62 (HFDR), Arg-118, and Arg-151. Residues Lys-201, Glu-323, and 353–356 (GGDT) each bind ATP.

The protein belongs to the phosphoglycerate kinase family. Monomer.

It is found in the cytoplasm. The enzyme catalyses (2R)-3-phosphoglycerate + ATP = (2R)-3-phospho-glyceroyl phosphate + ADP. The protein operates within carbohydrate degradation; glycolysis; pyruvate from D-glyceraldehyde 3-phosphate: step 2/5. This chain is Phosphoglycerate kinase, found in Caulobacter vibrioides (strain ATCC 19089 / CIP 103742 / CB 15) (Caulobacter crescentus).